Here is a 975-residue protein sequence, read N- to C-terminus: MGAEEEVQVTLAGGAPWGFRLQGGTEQRKPLQIRRRSQAGRAGLRERDQLLAINGVSCTNFSHASAMTLIDASGRQLVLTVRRVTDEGSVRSPSPGELQVLSPLSPLSPEPPGAPVSQALQPTSLRSPPDSEAYYGETDSDVDGPATQEKPRRTRRRGPARPSLPGAPPDEVYLSDSPAEPAPVKTGSPSQGDSRVSSPSWEEGAALQPPPAEALLLPHGPLRPGPHLIPMVGPVPHPVAEDLTTTYTQKAKQAKLQRAESLQEKSVKEARTKCRTIASLLTAAPNPHSKGVLMFKKRRQRAKKYTLVSFGAAAGTGTEEEDGIPPTSESELDEETFSDARSLTNQSDWDSPYLDMELARAGLGTAESQNSGLGGQLSEVSGRGVQLFEQQRQRVASSSQELAQVGPAAMLNGQSLQSPPRAQSAPPEAAVLPLSPLSVPAVSPTPFFPDGGAPIPAPSIFNRSARPFTPGLQGQRSGTTSVIFRPLAPKKVNEGLGSTSPAPSPFAAPPQGPTPLPSFTTVVPSHTPVSGASSSTQRSSGPVTATSSLYIPAPSRPVTPGGAPEPPTPPSAAAMTSTASIFLSTPLRNSARPEAPGPAVPEPASVREQRISVPAARTGILQEARRRGTRKQMFRPGKEETKNSPNPELLSLVQNLDEKPRAGGAESGPEEDALSLGAEACNFMQPLGGRSYKTLPQVSPKTPPPMAPKTPPPTTPKTPPPVAPKPGSRGLLDGLVNGSTPMVGIPEPPRLQGRGGELFAKRQSRADRYVVEATSGSSLNPGLRPRSPSPTPSLPPSWKYSPNIRAPPPIAYNPLLSPFFPQAARTLPNKAQSQGPRVTPKQGIKALDFMRHQPYQLKTAMFCFDEGSSTPGPTSGPPKTARVQEIRRFSTPAPQPTAEPLAPTVLVPRAATTLDEPIWRAELASTPVPNPDHQESLRSFAAAPSSCGFQVARPRFSATRTGLQAHVWRPGAGHQ.

The 80-residue stretch at 6 to 85 folds into the PDZ domain; sequence EVQVTLAGGA…QLVLTVRRVT (80 aa). Disordered regions lie at residues 18–41, 86–214, and 314–349; these read GFRLQGGTEQRKPLQIRRRSQAGR, DEGS…PAEA, and AGTGTEEEDGIPPTSESELDEETFSDARSLTNQSDW. 2 positions are modified to phosphoserine: S105 and S108. T138 carries the post-translational modification Phosphothreonine. 4 positions are modified to phosphoserine: S140, S163, S175, and S177. Residues 187–200 show a composition bias toward polar residues; the sequence is GSPSQGDSRVSSPS. Positions 202–214 are enriched in low complexity; sequence EEGAALQPPPAEA. Polar residues predominate over residues 339–349; it reads DARSLTNQSDW. Phosphoserine is present on residues S342, S347, S371, S378, and S381. Residues R383, R463, R466, and R476 each carry the omega-N-methylarginine modification. The disordered stretch occupies residues 491–649; sequence KVNEGLGSTS…ETKNSPNPEL (159 aa). The segment covering 502–516 has biased composition (pro residues); sequence APSPFAAPPQGPTPL. Positions 519–528 are enriched in polar residues; sequence FTTVVPSHTP. Low complexity-rich tracts occupy residues 530-540 and 571-580; these read SGASSSTQRSS and SAAAMTSTAS. A phosphoserine mark is found at S667 and S675. The interval 687 to 731 is disordered; that stretch reads LGGRSYKTLPQVSPKTPPPMAPKTPPPTTPKTPPPVAPKPGSRGL. Residues 701-724 show a composition bias toward pro residues; it reads KTPPPMAPKTPPPTTPKTPPPVAP. A phosphothreonine mark is found at T702 and T710. The residue at position 754 (R754) is an Omega-N-methylarginine. Positions 772 to 797 are disordered; the sequence is EATSGSSLNPGLRPRSPSPTPSLPPS. 2 positions are modified to phosphoserine: S787 and S789. At T791 the chain carries Phosphothreonine. Omega-N-methylarginine is present on residues R805, R825, and R888. The residue at position 890 (S890) is a Phosphoserine. A phosphothreonine mark is found at T891 and T897. R909 is subject to Omega-N-methylarginine. R920 carries the asymmetric dimethylarginine; alternate modification. Position 920 is an omega-N-methylarginine; alternate (R920). An omega-N-methylarginine mark is found at R953 and R955.

Belongs to the synaptopodin family.

The protein resides in the cytoplasm. It is found in the cytoskeleton. Actin-associated protein that may play a role in modulating actin-based shape. This is Synaptopodin 2-like protein (Synpo2l) from Mus musculus (Mouse).